The sequence spans 485 residues: Glutamyl-tRNA(Gln) amidotransferase subunit A (485 aa).

Catalysis depends on charge relay system residues lysine 78 and serine 153. The active-site Acyl-ester intermediate is the serine 177.

Belongs to the amidase family. GatA subfamily. Heterotrimer of A, B and C subunits.

It catalyses the reaction L-glutamyl-tRNA(Gln) + L-glutamine + ATP + H2O = L-glutaminyl-tRNA(Gln) + L-glutamate + ADP + phosphate + H(+). Its function is as follows. Allows the formation of correctly charged Gln-tRNA(Gln) through the transamidation of misacylated Glu-tRNA(Gln) in organisms which lack glutaminyl-tRNA synthetase. The reaction takes place in the presence of glutamine and ATP through an activated gamma-phospho-Glu-tRNA(Gln). In Bacillus cereus (strain Q1), this protein is Glutamyl-tRNA(Gln) amidotransferase subunit A.